The primary structure comprises 1509 residues: ABC transporter G family member 38 (1509 aa).

The ABC transporter 1 domain occupies 196–467 (LGLVGLNFAK…FERCGFRCPE (272 aa)). 229–236 (GPPSSGKT) serves as a coordination point for ATP. Residues 545-758 (ELLKTSCSKE…AYIAFSSNEM (214 aa)) form the ABC transmembrane type-2 1 domain. Transmembrane regions (helical) follow at residues 563–583 (FVYI…STVF), 598–618 (IYIG…FADL), 651–671 (IPSS…TMGF), 682–702 (LLVV…TAGL), 707–727 (VVTN…GGFI), 733–753 (IPKW…YIAF), and 791–811 (YWIA…LFSL). Residues 908–1160 (MSFNEINYYV…KVVEYFEAIP (253 aa)) enclose the ABC transporter 2 domain. 953-960 (GVSGAGKT) is an ATP binding site. The 215-residue stretch at 1233–1447 (NQFKLCLWKQ…TVYGLIVSQY (215 aa)) folds into the ABC transmembrane type-2 2 domain. 7 helical membrane passes run 1252–1272 (YNLV…TIFW), 1284–1304 (LLVI…ENSV), 1336–1356 (VVVE…IVYP), 1367–1387 (FFWF…YGMM), 1397–1417 (VASI…GFFI), 1425–1445 (WWVW…LIVS), and 1478–1498 (FMGV…FTYA).

Belongs to the ABC transporter superfamily. ABCG family. PDR (TC 3.A.1.205) subfamily.

The protein localises to the membrane. Functionally, may be a general defense protein. This chain is ABC transporter G family member 38, found in Oryza sativa subsp. japonica (Rice).